The primary structure comprises 295 residues: Ubiquitin-conjugating enzyme E2-34 kDa (295 aa).

The 163-residue stretch at 7 to 169 (TASSLLLRQY…VKMEVERSKQ (163 aa)) folds into the UBC core domain. Residue Cys95 is the Glycyl thioester intermediate of the active site. Residues 185 to 295 (ISQSKLDEPE…EDVERVSKKI (111 aa)) form a disordered region. A Phosphoserine modification is found at Ser186. Positions 189–200 (KLDEPESNKDMA) are enriched in basic and acidic residues. Acidic residues-rich tracts occupy residues 207–226 (SDLD…DYDD) and 234–265 (EDDD…DSID). The span at 269–279 (VMDRKQPHKAE) shows a compositional bias: basic and acidic residues. Ser282 and Ser292 each carry phosphoserine.

Belongs to the ubiquitin-conjugating enzyme family. In terms of assembly, interacts with CDC53. Component of the E3 ubiquitin ligase complexes SCF with CDC53, SKP1/CBF3D, HRT1 and some F-box proteins like MET30 and CDC4.

The protein localises to the cytoplasm. Its subcellular location is the nucleus. The catalysed reaction is S-ubiquitinyl-[E1 ubiquitin-activating enzyme]-L-cysteine + [E2 ubiquitin-conjugating enzyme]-L-cysteine = [E1 ubiquitin-activating enzyme]-L-cysteine + S-ubiquitinyl-[E2 ubiquitin-conjugating enzyme]-L-cysteine.. The protein operates within protein modification; protein ubiquitination. Catalyzes the covalent attachment of ubiquitin to other proteins. Capable, in vitro, to ubiquitinate histone H2A. In terms of biological role, mediates the initiation of DNA replication (transition of G1 to S phase in cell cycle). Essential component of the E3 ubiquitin ligase complex SCF (SKP1-CUL1-F-box protein), which mediates the ubiquitination and subsequent proteasomal degradation of target proteins. Involved in the regulation of methionine biosynthesis genes and in the degradation of CDC6 together with CDC4 and CDC53. This is Ubiquitin-conjugating enzyme E2-34 kDa (CDC34) from Saccharomyces cerevisiae (strain ATCC 204508 / S288c) (Baker's yeast).